Reading from the N-terminus, the 521-residue chain is Melanopsin (521 aa).

Topologically, residues 1–71 (MDSPSGPRVL…VDVPDHAHYT (71 aa)) are extracellular. N30 and N34 each carry an N-linked (GlcNAc...) asparagine glycan. Residues 72–92 (LGTVILLVGLTGMLGNLTVIY) form a helical membrane-spanning segment. The Cytoplasmic segment spans residues 93–106 (TFCRNRGLRTPANM). Residues 107 to 127 (FIINLAVSDFLMSVTQAPVFF) form a helical membrane-spanning segment. The Extracellular portion of the chain corresponds to 128–143 (ASSLYKKWLFGETGCE). The cysteines at positions 142 and 220 are disulfide-linked. The chain crosses the membrane as a helical span at residues 144–164 (FYAFCGAVFGITSMITLTAIA). The Cytoplasmic portion of the chain corresponds to 165–187 (MDRYLVITRPLATIGRGSKRRTA). The helical transmembrane segment at 188–208 (LVLLGVWLYALAWSLPPFFGW) threads the bilayer. Residues 209–237 (SAYVPEGLLTSCSWDYMTFTPQVRAYTML) lie on the Extracellular side of the membrane. The helical transmembrane segment at 238-258 (LFCFVFFLPLLIIIFCYIFIF) threads the bilayer. Residues 259–293 (RAIRETGRACEGCGESPLRQRRQWQRLQSEWKMAK) lie on the Cytoplasmic side of the membrane. Residues 294 to 314 (VALIVILLFVLSWAPYSTVAL) form a helical membrane-spanning segment. The Extracellular segment spans residues 315 to 329 (VAFAGYSHILTPYMS). Residues 330–350 (SVPAVIAKASAIHNPIIYAIT) form a helical membrane-spanning segment. K337 carries the post-translational modification N6-(retinylidene)lysine. Residues 351-521 (HPKYRVAIAQ…LEDDVTLRHL (171 aa)) lie on the Cytoplasmic side of the membrane. Positions 445-486 (GELKASSSPQVQRSKTPKVPGPSTCRPMKGQGARPSSLRGDQ) are disordered. The span at 449–458 (ASSSPQVQRS) shows a compositional bias: polar residues.

It belongs to the G-protein coupled receptor 1 family. Opsin subfamily. Expressed in the retinal pigment epithelium and ganglion cell layer (at protein level). Also expressed in amacrine cell layers of the retina. Weakly expressed in vibrissae, and tail. As to expression, observed with processes in the outer strata of inner plexiform layer (IPL) close to the inner nuclear layer (INL) or is found to be bistratified with processes located both in the inner (ON) or outer (OFF) layers of the IPL (at protein level). A second population of isoform 1 is identified in processes which are confined to the inner layer of the IPL near to the ganglion cell layer (GCL) (at protein level). In terms of tissue distribution, about 40 times more abundant than isoform 1 in the retina (at protein level). Isoform 2 is involved in processes localized to the outer IPL or is bistratified with processes in both the inner and outer layers of the IPL (at protein level). Isoform 2 is absent in the processes confined only to the inner layer of the IPL (at protein level).

It is found in the cell membrane. The protein localises to the cell projection. Its subcellular location is the axon. It localises to the dendrite. The protein resides in the perikaryon. Functionally, photoreceptor that binds cis-retinaldehydes. Contributes to pupillar reflex, photoentrainment and other non-image forming responses to light. May be involved in the optokinetic visual tracking response. May be involved in the regulation of retinal hyaloid vessel growth and regression. This chain is Melanopsin (Opn4), found in Mus musculus (Mouse).